The chain runs to 296 residues: Bifunctional protein FolD 1 (296 aa).

Residues 167–169 (GCG) and Ile-235 each bind NADP(+).

The protein belongs to the tetrahydrofolate dehydrogenase/cyclohydrolase family. In terms of assembly, homodimer.

The catalysed reaction is (6R)-5,10-methylene-5,6,7,8-tetrahydrofolate + NADP(+) = (6R)-5,10-methenyltetrahydrofolate + NADPH. It carries out the reaction (6R)-5,10-methenyltetrahydrofolate + H2O = (6R)-10-formyltetrahydrofolate + H(+). It functions in the pathway one-carbon metabolism; tetrahydrofolate interconversion. Functionally, catalyzes the oxidation of 5,10-methylenetetrahydrofolate to 5,10-methenyltetrahydrofolate and then the hydrolysis of 5,10-methenyltetrahydrofolate to 10-formyltetrahydrofolate. The sequence is that of Bifunctional protein FolD 1 from Nocardioides sp. (strain ATCC BAA-499 / JS614).